The sequence spans 101 residues: Large ribosomal subunit protein uL24 (101 aa).

This sequence belongs to the universal ribosomal protein uL24 family. In terms of assembly, part of the 50S ribosomal subunit.

Its function is as follows. One of two assembly initiator proteins, it binds directly to the 5'-end of the 23S rRNA, where it nucleates assembly of the 50S subunit. Functionally, one of the proteins that surrounds the polypeptide exit tunnel on the outside of the subunit. The sequence is that of Large ribosomal subunit protein uL24 from Borrelia recurrentis (strain A1).